We begin with the raw amino-acid sequence, 145 residues long: UPF0102 protein BAV3162 (145 aa).

Belongs to the UPF0102 family.

In Bordetella avium (strain 197N), this protein is UPF0102 protein BAV3162.